Reading from the N-terminus, the 206-residue chain is Small ribosomal subunit protein uS4 (206 aa).

The S4 RNA-binding domain maps to 96-156 (GRLDNVVYRM…EKSKKQSRIK (61 aa)).

Belongs to the universal ribosomal protein uS4 family. In terms of assembly, part of the 30S ribosomal subunit. Contacts protein S5. The interaction surface between S4 and S5 is involved in control of translational fidelity.

One of the primary rRNA binding proteins, it binds directly to 16S rRNA where it nucleates assembly of the body of the 30S subunit. Its function is as follows. With S5 and S12 plays an important role in translational accuracy. The chain is Small ribosomal subunit protein uS4 from Photorhabdus laumondii subsp. laumondii (strain DSM 15139 / CIP 105565 / TT01) (Photorhabdus luminescens subsp. laumondii).